The following is a 208-amino-acid chain: Peptidyl-tRNA hydrolase 2 (208 aa).

A compositionally biased stretch (low complexity) spans 32–45 (SNASSTKKSSATLL). The segment at 32–81 (SNASSTKKSSATLLRSKEMKEGKLHNDTDEEESESEDESDEDEDIESTSL) is disordered. Over residues 46–58 (RSKEMKEGKLHND) the composition is skewed to basic and acidic residues. A compositionally biased stretch (acidic residues) spans 59–77 (TDEEESESEDESDEDEDIE). Lys-152 is covalently cross-linked (Glycyl lysine isopeptide (Lys-Gly) (interchain with G-Cter in ubiquitin)).

Belongs to the PTH2 family.

Its subcellular location is the cytoplasm. It catalyses the reaction an N-acyl-L-alpha-aminoacyl-tRNA + H2O = an N-acyl-L-amino acid + a tRNA + H(+). Its function is as follows. The natural substrate for this enzyme may be peptidyl-tRNAs which drop off the ribosome during protein synthesis. This is Peptidyl-tRNA hydrolase 2 from Saccharomyces cerevisiae (strain ATCC 204508 / S288c) (Baker's yeast).